Here is a 306-residue protein sequence, read N- to C-terminus: Dioxygenase FrzG (306 aa).

Fe cation contacts are provided by histidine 132, aspartate 134, and histidine 216.

The protein belongs to the PhyH family. As to quaternary structure, homodimer. It depends on Fe cation as a cofactor.

It carries out the reaction (1S,4S)-4-[(4-methoxyphenyl)methyl]-2-methyl-2,5-diazaspiro[bicyclo[3.2.1]octane-6,1'-cyclohexan]-4'-one + 2-oxoglutarate + O2 = (2S)-3-(4-methoxyphenyl)-2-[(3S)-3-(methylamino)-8-oxo-1-azaspiro[4.5]decan-1-yl]propanal + succinate + CO2. Its pathway is secondary metabolite biosynthesis. Its function is as follows. Dioxygenase; part of the gene cluster that mediates the biosynthesis of the alkaloid (-)-FR901483, a potent immunosuppressant that shows efficacy in animal models and a probable inhibitor of purine nucleotide biosynthesis by targeting phosphoribosylpyrophosphate amidotransferase (PPAT). Within the pathway, FrzG cleaves the C9-N10' bond to yield a conjugated iminium. FrzG is also able to catalyze the dehydrogenation between C7 and C8 which leads to a shunt product. The biosynthesis of (-)-FR901483 starts with the condensation of two L-tyrosines to yield (S,S)-dityrosyl-piperazine. This process occurs in 3 steps with the non-canonical nonribosomal peptide synthetase FrzA catalyzing the reduction of L-tyrosine into L-tyrosinal, the spontaneous condensation of 2 L-tyrosinal units, and the subsequent reduction by the NmrA-like family domain-containing oxidoreductase FrzB. The cytochrome P450 monooxygenase FrzC then performs coupling between N10 and C1' to morph the piperazine into a 1,4-diazabicyclo[3.2.1]octane spiro-fused to a 2,5-cyclohexadienone. The dienone portion is further reduced to cyclohexanone by the flavin-dependent reductase FrzD. The methyltranserases (MTs) FrzE and FrzF are then involved in the methylation at the C10' amine and the C4 phenolic oxygen, respectively. The order of the two MTs appear to be interchangeable. Cleavage of the C9-N10' bond by the dioxygenase FrzG then leads to formation of a conjugated iminium. In addition to the oxidation of C9, an additional dehydrogenation between C7 and C8 can occur to give a likely shunt product. The next biosynthetic step is the intramolecular aldol condensation catalyzed by the newly identified aldolase FrzH to yield an aza-tricyclic product with the formation of a C9-C3' bond. The short-chain dehydrogenase/reductase FrzI then produces dephospho-(-)-FR901483 that is phosphorylated at C4'-OH into (-)-FR901483 by the phosphotransferase FrzJ. This is Dioxygenase FrzG from Cladobotryum sp.